The primary structure comprises 314 residues: Homoserine O-acetyltransferase (314 aa).

Cys-142 serves as the catalytic Acyl-thioester intermediate. Residues Lys-163 and Ser-192 each coordinate substrate. The Proton acceptor role is filled by His-235. The active site involves Glu-237. Arg-249 serves as a coordination point for substrate.

Belongs to the MetA family.

It localises to the cytoplasm. It catalyses the reaction L-homoserine + acetyl-CoA = O-acetyl-L-homoserine + CoA. It functions in the pathway amino-acid biosynthesis; L-methionine biosynthesis via de novo pathway; O-acetyl-L-homoserine from L-homoserine: step 1/1. Functionally, transfers an acetyl group from acetyl-CoA to L-homoserine, forming acetyl-L-homoserine. The protein is Homoserine O-acetyltransferase of Streptococcus pneumoniae (strain Taiwan19F-14).